A 352-amino-acid chain; its full sequence is RING finger protein 39 (352 aa).

The RING-type zinc finger occupies 20-67 (CPLCGGPFEDPVLLACEHSFCRSCLARCWGSPAAPGSEEATPSCPCCG). The interval 98-118 (PGARTGRRRGGRIPTMGCLDP) is disordered. The B30.2/SPRY domain occupies 142-352 (EDLPEDYPVV…APLRIVPGEA (211 aa)).

Expressed in the hippocampus. Expression is rapidly up-regulated in granule cells of the dentate gyrus after LTP induction.

Its subcellular location is the cytoplasm. It catalyses the reaction S-ubiquitinyl-[E2 ubiquitin-conjugating enzyme]-L-cysteine + [acceptor protein]-L-lysine = [E2 ubiquitin-conjugating enzyme]-L-cysteine + N(6)-ubiquitinyl-[acceptor protein]-L-lysine.. It participates in protein modification; protein ubiquitination. In terms of biological role, plays an inhibitory role in anti-RNA viral innate immunity by targeting the adapter DDX3X and promoting its 'Lys-48'-linked polyubiquitination. Alternatively, enhances the cGAS-STING pathway activation by promoting 'Lys-63'-linked ubiquitination of STING1, facilitating the STING1-TBK1 complex formation and STING1 activation. This chain is RING finger protein 39 (Rnf39), found in Rattus norvegicus (Rat).